Reading from the N-terminus, the 325-residue chain is NADH-quinone oxidoreductase subunit H (325 aa).

8 consecutive transmembrane segments (helical) span residues 8 to 28 (VIDI…VVTC), 81 to 101 (GIFT…FAIV), 114 to 134 (IGVL…LFAG), 159 to 179 (FLGL…LGAI), 186 to 206 (LWNV…GVAV), 237 to 257 (FFVG…TLFF), 265 to 285 (LPPF…FILI), and 304 to 324 (ICLP…LYNA).

Belongs to the complex I subunit 1 family. In terms of assembly, NDH-1 is composed of 13 different subunits. Subunits NuoA, H, J, K, L, M, N constitute the membrane sector of the complex.

Its subcellular location is the cell inner membrane. It carries out the reaction a quinone + NADH + 5 H(+)(in) = a quinol + NAD(+) + 4 H(+)(out). In terms of biological role, NDH-1 shuttles electrons from NADH, via FMN and iron-sulfur (Fe-S) centers, to quinones in the respiratory chain. The immediate electron acceptor for the enzyme in this species is believed to be ubiquinone. Couples the redox reaction to proton translocation (for every two electrons transferred, four hydrogen ions are translocated across the cytoplasmic membrane), and thus conserves the redox energy in a proton gradient. This subunit may bind ubiquinone. This is NADH-quinone oxidoreductase subunit H from Sodalis glossinidius (strain morsitans).